We begin with the raw amino-acid sequence, 223 residues long: von Willebrand factor C domain-containing protein 2-like (223 aa).

The N-terminal stretch at 1–21 (MGPFLPAICVVLLALNAAVSP) is a signal peptide. VWFC domains follow at residues 51 to 110 (KGCV…PECK) and 114 to 172 (NFCE…PICK).

It is found in the secreted. It localises to the synapse. Its function is as follows. May play a role in bone differentiation and matrix mineralization. May play a role in neural development. This chain is von Willebrand factor C domain-containing protein 2-like (vwc2l), found in Danio rerio (Zebrafish).